The primary structure comprises 132 residues: MEALNADVTQGLEKGSLITCADNTGARELKVTSISGYSGTKNRHPKAGLGDKITVSVTKGTPEMRRQVLEAVVIRQRKPIRRPDGTRVKFEDNAAVIVDENEDPRGTELKGPIAREVAERFGSIASTATIIV.

It belongs to the universal ribosomal protein uL14 family. As to quaternary structure, part of the 50S ribosomal subunit. Forms a cluster with proteins L3 and L24e, part of which may contact the 16S rRNA in 2 intersubunit bridges.

In terms of biological role, binds to 23S rRNA. Forms part of two intersubunit bridges in the 70S ribosome. The sequence is that of Large ribosomal subunit protein uL14 from Natronomonas pharaonis (strain ATCC 35678 / DSM 2160 / CIP 103997 / JCM 8858 / NBRC 14720 / NCIMB 2260 / Gabara) (Halobacterium pharaonis).